Consider the following 95-residue polypeptide: Large ribosomal subunit protein bL27 (95 aa).

The propeptide occupies 1-10 (MRFILNLQFF).

This sequence belongs to the bacterial ribosomal protein bL27 family. In terms of processing, the N-terminus is cleaved by ribosomal processing cysteine protease Prp.

This is Large ribosomal subunit protein bL27 from Mesoplasma florum (strain ATCC 33453 / NBRC 100688 / NCTC 11704 / L1) (Acholeplasma florum).